Consider the following 172-residue polypeptide: Stellate protein CG33238 (172 aa).

Belongs to the casein kinase 2 subunit beta family. As to quaternary structure, interacts in vitro with the casein kinase 2 alpha subunit (CkII-alpha). The relevance of such interaction is however unclear in vivo. Probably not expressed in wild-type flies. In males lacking the Y chromosome, it is testis-specific and constitutes the main component of star-shaped crystals.

Its function is as follows. Unknown. In males lacking the Y chromosome, its strong overexpression leads to the appearance of proteinaceous star-shaped crystals in the primary spermatocytes causing meiotic drive, possibly by interfering with normal casein kinase 2 activity. This chain is Stellate protein CG33238 (Ste:CG33238), found in Drosophila melanogaster (Fruit fly).